A 195-amino-acid chain; its full sequence is Large ribosomal subunit protein bL17 (195 aa).

Residues 132-195 form a disordered region; that stretch reads ARGTRFAARK…TEAKDTKPES (64 aa). The span at 159–186 shows a compositional bias: low complexity; sequence PTAAAVAAEAQAEQPTAEAVAADDAATT.

This sequence belongs to the bacterial ribosomal protein bL17 family. Part of the 50S ribosomal subunit. Contacts protein L32.

The sequence is that of Large ribosomal subunit protein bL17 from Parafrankia sp. (strain EAN1pec).